The following is a 304-amino-acid chain: D-alanine--D-alanine ligase (304 aa).

In terms of domain architecture, ATP-grasp spans 101–298; it reads KKIFIKNKIL…FIKLIEWILK (198 aa). Residue 131–184 coordinates ATP; the sequence is EKNLKFPVVVKPINEGSSVHVYICDKTNILKNLKVLKSYNEILIEEFIPGREIQ. The Mg(2+) site is built by Asp253, Glu265, and Asn267.

It belongs to the D-alanine--D-alanine ligase family. The cofactor is Mg(2+). Mn(2+) is required as a cofactor.

The protein resides in the cytoplasm. It catalyses the reaction 2 D-alanine + ATP = D-alanyl-D-alanine + ADP + phosphate + H(+). The protein operates within cell wall biogenesis; peptidoglycan biosynthesis. Cell wall formation. In Pelagibacter ubique (strain HTCC1062), this protein is D-alanine--D-alanine ligase.